The sequence spans 532 residues: 2,3-bisphosphoglycerate-independent phosphoglycerate mutase (532 aa).

Mn(2+) is bound by residues Asp-15 and Ser-65. The Phosphoserine intermediate role is filled by Ser-65. Residues His-126, 156 to 157 (RD), Arg-188, Arg-194, 258 to 261 (RPDR), and Lys-331 each bind substrate. Mn(2+) contacts are provided by Asp-398, His-402, Asp-439, His-440, and His-457.

This sequence belongs to the BPG-independent phosphoglycerate mutase family. As to quaternary structure, monomer. The cofactor is Mn(2+).

The enzyme catalyses (2R)-2-phosphoglycerate = (2R)-3-phosphoglycerate. It functions in the pathway carbohydrate degradation; glycolysis; pyruvate from D-glyceraldehyde 3-phosphate: step 3/5. In terms of biological role, catalyzes the interconversion of 2-phosphoglycerate and 3-phosphoglycerate. The polypeptide is 2,3-bisphosphoglycerate-independent phosphoglycerate mutase (Trichodesmium erythraeum (strain IMS101)).